We begin with the raw amino-acid sequence, 75 residues long: Small ribosomal subunit protein bS18 (75 aa).

Belongs to the bacterial ribosomal protein bS18 family. In terms of assembly, part of the 30S ribosomal subunit. Forms a tight heterodimer with protein bS6.

Binds as a heterodimer with protein bS6 to the central domain of the 16S rRNA, where it helps stabilize the platform of the 30S subunit. The chain is Small ribosomal subunit protein bS18 from Thermosipho melanesiensis (strain DSM 12029 / CIP 104789 / BI429).